The sequence spans 203 residues: MAKGRKPTTMNRSDRYLGSYTYGDSHGNSVTDELELGEEDIWSPAVIHDDTTENEESYGTWNLRATLGKNGRVGGLSLAFEGSLVAPPSSSPMIVQKIHGGGGEGEEDRRKLASSAPVNVPDWSKIYRVDSVESIHELDDEDDEDEESGMMPPHEYLAKSQARRSRKIGGGGASVFDGVGRTLKGRELRRVRDAIWSQTGFYG.

The tract at residues 1 to 33 (MAKGRKPTTMNRSDRYLGSYTYGDSHGNSVTDE) is disordered.

This sequence belongs to the senescence regulator S40 family.

It is found in the cytoplasm. The polypeptide is Protein S40-6 (Arabidopsis thaliana (Mouse-ear cress)).